The chain runs to 453 residues: Bifunctional protein GlmU (453 aa).

The segment at 1-225 (MNIVILAAGT…EWETLGVNSK (225 aa)) is pyrophosphorylase. Residues 6–9 (LAAG), K20, Q71, 76–77 (GT), 98–100 (YGD), G135, E150, N165, and N223 contribute to the UDP-N-acetyl-alpha-D-glucosamine site. D100 contributes to the Mg(2+) binding site. A Mg(2+)-binding site is contributed by N223. The linker stretch occupies residues 226-246 (AQLAELERIHQRNIAEALLVD). Positions 247-453 (GVTLADPARL…GYVRPVKKKS (207 aa)) are N-acetyltransferase. UDP-N-acetyl-alpha-D-glucosamine is bound by residues R329 and K347. H359 serves as the catalytic Proton acceptor. UDP-N-acetyl-alpha-D-glucosamine contacts are provided by Y362 and N373. Acetyl-CoA-binding positions include A376, 382–383 (NY), S401, and A419.

It in the N-terminal section; belongs to the N-acetylglucosamine-1-phosphate uridyltransferase family. In the C-terminal section; belongs to the transferase hexapeptide repeat family. Homotrimer. Requires Mg(2+) as cofactor.

It is found in the cytoplasm. It catalyses the reaction alpha-D-glucosamine 1-phosphate + acetyl-CoA = N-acetyl-alpha-D-glucosamine 1-phosphate + CoA + H(+). It carries out the reaction N-acetyl-alpha-D-glucosamine 1-phosphate + UTP + H(+) = UDP-N-acetyl-alpha-D-glucosamine + diphosphate. The protein operates within nucleotide-sugar biosynthesis; UDP-N-acetyl-alpha-D-glucosamine biosynthesis; N-acetyl-alpha-D-glucosamine 1-phosphate from alpha-D-glucosamine 6-phosphate (route II): step 2/2. It functions in the pathway nucleotide-sugar biosynthesis; UDP-N-acetyl-alpha-D-glucosamine biosynthesis; UDP-N-acetyl-alpha-D-glucosamine from N-acetyl-alpha-D-glucosamine 1-phosphate: step 1/1. Its pathway is bacterial outer membrane biogenesis; LPS lipid A biosynthesis. Its function is as follows. Catalyzes the last two sequential reactions in the de novo biosynthetic pathway for UDP-N-acetylglucosamine (UDP-GlcNAc). The C-terminal domain catalyzes the transfer of acetyl group from acetyl coenzyme A to glucosamine-1-phosphate (GlcN-1-P) to produce N-acetylglucosamine-1-phosphate (GlcNAc-1-P), which is converted into UDP-GlcNAc by the transfer of uridine 5-monophosphate (from uridine 5-triphosphate), a reaction catalyzed by the N-terminal domain. In Burkholderia lata (strain ATCC 17760 / DSM 23089 / LMG 22485 / NCIMB 9086 / R18194 / 383), this protein is Bifunctional protein GlmU.